The sequence spans 180 residues: Protein YOP1 (180 aa).

Position 2 is an N-acetylserine (serine 2). The segment at 2–17 (SEYASSIHSQMKQFDT) is interaction with YIP1. Residues 2 to 35 (SEYASSIHSQMKQFDTKYSGNRILQQLENKTNLP) are Cytoplasmic-facing. The helical transmembrane segment at 36–55 (KSYLVAGLGFAYLLLIFINV) threads the bilayer. The Lumenal portion of the chain corresponds to 56–57 (GG). Residues 58–78 (VGEILSNFAGFVLPAYLSLVA) form a helical membrane-spanning segment. Over 79–88 (LKTPTSTDDT) the chain is Cytoplasmic. A helical transmembrane segment spans residues 89–105 (QLLTYWIVFSFLSVIEF). Residues 106 to 108 (WSK) are Lumenal-facing. Residues 109 to 127 (AILYLIPFYWFLKTVFLIY) form a helical membrane-spanning segment. The Cytoplasmic segment spans residues 128–180 (IALPQTGGARMIYQKIVAPLTDRYILRDVSKTEKDEIRASVNEASKATGASVH).

The protein belongs to the DP1 family. Oligomer. Interacts with YIP1.

The protein resides in the endoplasmic reticulum membrane. It is found in the golgi apparatus membrane. Functionally, required to generate and maintain the structure of the tubular endoplasmic reticulum network and the vacuole. Induces high curvature in membranes and causes membrane tubule formation. Involved in membrane/vesicle trafficking. The sequence is that of Protein YOP1 (YOP1) from Saccharomyces cerevisiae (strain ATCC 204508 / S288c) (Baker's yeast).